The following is a 286-amino-acid chain: GTP cyclohydrolase 1 type 2 homolog (286 aa).

A divalent metal cation-binding residues include histidine 66, histidine 67, aspartate 103, histidine 254, and glutamate 258.

It belongs to the GTP cyclohydrolase I type 2/NIF3 family. In terms of assembly, homohexamer.

The sequence is that of GTP cyclohydrolase 1 type 2 homolog from Treponema pallidum (strain Nichols).